The chain runs to 150 residues: 3-hydroxyacyl-[acyl-carrier-protein] dehydratase FabZ (150 aa).

H51 is an active-site residue.

This sequence belongs to the thioester dehydratase family. FabZ subfamily.

It is found in the cytoplasm. The enzyme catalyses a (3R)-hydroxyacyl-[ACP] = a (2E)-enoyl-[ACP] + H2O. Its function is as follows. Involved in unsaturated fatty acids biosynthesis. Catalyzes the dehydration of short chain beta-hydroxyacyl-ACPs and long chain saturated and unsaturated beta-hydroxyacyl-ACPs. The sequence is that of 3-hydroxyacyl-[acyl-carrier-protein] dehydratase FabZ from Legionella pneumophila subsp. pneumophila (strain Philadelphia 1 / ATCC 33152 / DSM 7513).